Reading from the N-terminus, the 66-residue chain is Small vasohibin-binding protein (66 aa).

Residues M1 to K23 are compositionally biased toward basic and acidic residues. The disordered stretch occupies residues M1–E30. Residues A5–Q52 are a coiled coil.

It belongs to the SVBP family. As to quaternary structure, interacts with VASH1 and VASH2. In terms of tissue distribution, highly expressed in bone marrow, spleen and testis.

It is found in the cytoplasm. It localises to the secreted. Its subcellular location is the cytoskeleton. Functionally, enhances the tyrosine carboxypeptidase activity of VASH1 and VASH2, thereby promoting the removal of the C-terminal tyrosine residue of alpha-tubulin. Also required to enhance the solubility and secretion of VASH1 and VASH2. Plays a role in axon and excitatory synapse formation. The polypeptide is Small vasohibin-binding protein (Mus musculus (Mouse)).